The sequence spans 1274 residues: Meiosis inhibitor protein 1 (1274 aa).

In terms of tissue distribution, expressed predominantly in testis. Weakly expressed in spleen and thymus. Expressed in the ovaries, Fallopian tubes and uterus.

Required for normal meiotic chromosome synapsis. May be involved in the formation of meiotic double-strand breaks (DSBs) in spermatocytes. This Homo sapiens (Human) protein is Meiosis inhibitor protein 1.